A 273-amino-acid chain; its full sequence is Phosphatidylglycerol--prolipoprotein diacylglyceryl transferase (273 aa).

7 helical membrane-spanning segments follow: residues 21-41 (ISVR…LWLA), 60-80 (LLFA…VLFY), 95-115 (VWTG…AMLW), 124-144 (FFGV…MGRM), 176-196 (SQLY…NWFI), 203-223 (GSVS…VEYV), and 236-256 (FISM…LMMV). Arginine 143 is a binding site for a 1,2-diacyl-sn-glycero-3-phospho-(1'-sn-glycerol).

The protein belongs to the Lgt family.

It localises to the cell inner membrane. The catalysed reaction is L-cysteinyl-[prolipoprotein] + a 1,2-diacyl-sn-glycero-3-phospho-(1'-sn-glycerol) = an S-1,2-diacyl-sn-glyceryl-L-cysteinyl-[prolipoprotein] + sn-glycerol 1-phosphate + H(+). It functions in the pathway protein modification; lipoprotein biosynthesis (diacylglyceryl transfer). Functionally, catalyzes the transfer of the diacylglyceryl group from phosphatidylglycerol to the sulfhydryl group of the N-terminal cysteine of a prolipoprotein, the first step in the formation of mature lipoproteins. The polypeptide is Phosphatidylglycerol--prolipoprotein diacylglyceryl transferase (Vibrio atlanticus (strain LGP32) (Vibrio splendidus (strain Mel32))).